We begin with the raw amino-acid sequence, 433 residues long: Enolase (433 aa).

(2R)-2-phosphoglycerate is bound at residue Gln166. The Proton donor role is filled by Glu208. Mg(2+) is bound by residues Asp245, Glu290, and Asp317. 4 residues coordinate (2R)-2-phosphoglycerate: Lys342, Arg371, Ser372, and Lys393. Lys342 functions as the Proton acceptor in the catalytic mechanism.

This sequence belongs to the enolase family. The cofactor is Mg(2+).

Its subcellular location is the cytoplasm. The protein resides in the secreted. The protein localises to the cell surface. The enzyme catalyses (2R)-2-phosphoglycerate = phosphoenolpyruvate + H2O. It participates in carbohydrate degradation; glycolysis; pyruvate from D-glyceraldehyde 3-phosphate: step 4/5. Catalyzes the reversible conversion of 2-phosphoglycerate (2-PG) into phosphoenolpyruvate (PEP). It is essential for the degradation of carbohydrates via glycolysis. The polypeptide is Enolase (Clostridium novyi (strain NT)).